Consider the following 362-residue polypeptide: MSSPPLSSPVPQVKTTQNGKSPDATVHLLAGAIAGLVSAVTLQPFDLLKTRLQQQQLTTKQEVRTTLTKELKKLTRVKDLWRGTLPSTLRTSIGAGLYFTTLSKMRTSWGEYKQSKDSSINLKSNSSILPKLTAMENLTTGFIARGIVGYITMPITIIKTRFESNLYNYNSMYEGISGIYLDDKKQQQQIRNPSINKGVGGGGSWKNFFKGSVATLARDCPYAGLYVLTYEAFKNDLIPLIIPNSSLSLSSSSSLSSSSSLFVFNDNNRSSIINSTAAVLAASTCTTITAPFDAIKTRLQLTNEEGGSMTTVLKKMLREDGGIKNLFRGLSLRLGRKGISAGISWCIYEELIKSNYFQSKFL.

3 Solcar repeats span residues 22–108 (PDAT…MRTS), 132–236 (LTAM…FKND), and 269–354 (RSSI…LIKS). Helical transmembrane passes span 28 to 53 (LLAG…TRLQ), 83 to 109 (GTLP…RTSW), 138 to 163 (LTTG…TRFE), 211 to 234 (GSVA…EAFK), 273 to 299 (INST…KTRL), and 329 to 347 (GLSL…SWCI).

Belongs to the mitochondrial carrier (TC 2.A.29) family. SLC25A38 subfamily.

It is found in the mitochondrion inner membrane. It catalyses the reaction glycine(in) = glycine(out). Functionally, mitochondrial glycine transporter that imports glycine into the mitochondrial matrix. Plays an important role in providing glycine for the first enzymatic step in heme biosynthesis, the condensation of glycine with succinyl-CoA to produce 5-aminolevulinate (ALA) in the mitochondrial matrix. This Candida albicans (strain SC5314 / ATCC MYA-2876) (Yeast) protein is Mitochondrial glycine transporter.